The sequence spans 1777 residues: Non-reducing polyketide synthase nscA (1777 aa).

The N-terminal acylcarrier protein transacylase domain (SAT) stretch occupies residues 27 to 261 (DLFRRLDQHS…PLPVYDGLCH (235 aa)). The Ketosynthase family 3 (KS3) domain maps to 396–829 (SSKLAIVGMA…GGNTTLLLED (434 aa)). Active-site for beta-ketoacyl synthase activity residues include cysteine 569, histidine 704, and histidine 747. Residues 934 to 1212 (AFTGQGAYYH…SAIPSCRRNE (279 aa)) form a malonyl-CoA:ACP transacylase (MAT) domain region. The tract at residues 1297–1616 (TSLVHQITAE…RLLMDRFFSP (320 aa)) is product template (PT) domain. Positions 1301-1437 (HQITAETVEA…ATIRFEDPEA (137 aa)) are N-terminal hotdog fold. Positions 1301–1611 (HQITAETVEA…FRRVPRLLMD (311 aa)) constitute a PKS/mFAS DH domain. The active-site Proton acceptor; for dehydratase activity is the histidine 1333. A C-terminal hotdog fold region spans residues 1465 to 1611 (ASRLSKPLAY…FRRVPRLLMD (147 aa)). Aspartate 1522 serves as the catalytic Proton donor; for dehydratase activity. Positions 1674–1704 (LLATSSKSSTPKESPIVTPAESERAEPVDNS) are disordered. The segment covering 1677–1688 (TSSKSSTPKESP) has biased composition (low complexity). In terms of domain architecture, Carrier spans 1700-1777 (PVDNSMTSQC…EMTAWIEEYC (78 aa)). Serine 1737 bears the O-(pantetheine 4'-phosphoryl)serine mark.

Pantetheine 4'-phosphate is required as a cofactor.

The protein operates within secondary metabolite biosynthesis. Functionally, non-reducing polyketide synthase; part of the gene cluster that mediates the biosynthesis of neosartoricin B, a prenylated anthracenone that probably exhibits T-cell antiproliferative activity, suggestive of a physiological role as an immunosuppressive agent. The non-reducing polyketide synthase nscA probably synthesizes and cyclizes the decaketide backbone. The hydrolase nscB then mediates the product release through hydrolysis followed by spontaneous decarboxylation. The prenyltransferase nscD catalyzes the addition of the dimethylallyl group to the aromatic C5. The FAD-dependent monooxygenase nscC is then responsible for the stereospecific hydroxylation at C2. Neosartoricin B can be converted into two additional compounds neosartoricins C and D. Neosartoricin C is a spirocyclic compound that is cyclized through the attack of C3 hydroxyl on C14, followed by dehydration. On the other hand, neosartoricin D is a further cyclized compound in which attack of C2 on C14 in neosartoricin C results in the formation of the acetal-containing dioxabicyclo-octanone ring. Both of these compounds are novel and possibly represent related metabolites of the gene cluster. This chain is Non-reducing polyketide synthase nscA, found in Trichophyton equinum (strain ATCC MYA-4606 / CBS 127.97) (Horse ringworm fungus).